The following is a 1013-amino-acid chain: MCSQEAFQAQRSQLVGLLVSGSLEGFESILDLLLSWEVLSWEDYEGLRLVGQPLSHLARRLLDTVWNKGTWGCQKLIAAVQEAQDSSQCPELHGCWDPHSLHPAQDLQSHRPAIVRRLYSHVEGVLDLALEQGFISQYECDEIRLPIFTSSQRARRLLDLATVKANGLAAFLLQHVQKLPVSLSLPFEAAACKKYMSKLRTIVAAQSRFLSTYDGAENLCLEDIYTENTLEVRTEVGMAGPLHKSPAALGLEELFSPNGHLNEDADTVLVVGEAGSGKSTLLQQVHLLWATGQDFQEFLFVFPFSCRQLQCVARPLSVMTLLFEHCCWPDVGQQDVFQFLLDHPDRILLTFDGFDEFKFKFTDHERHCSPTDPTSVQTLLFNLLQGNLLKNARKVLTSRPDAVSAFLRKYVRTEFNLKGFSEEGIELYLRKCHREPGVADRLIHLLQTTSALHGLCHLPVFSWMVSKCHQELLLQDGGSPKTTTDMYLLILQHFLRHASLPDSASQGLGPSLLQGRLPTLLRLGQLALWGLGMCCYVFSAQQLQAAQVDPDDISLGFLVQAQGVVPGSTAPLEFLHITFQCFLAAFYLVLSTDVPTASLRYLFNCRRPGSSPLSRLLPRLCVQGSEHKESTVAALLQKTEPHNLQITAAFLAGLLSREHRDLLAACQASERSLLRRRACARWCLARSLHKHFRSIPPAVPGEAKSMHAMPGFLWLIRSLYEMQEERLAQEAVRGLNVEHLKLTFCGVGPAECAALAFVLRHLRRPVALQLDHNSVGDIGVEQLLPCLGACKALYLRDNNISDRGICKLIEHALHCEQLQKLALFNNKLTDGCAHSVAQLLACKQNFLALRLGNNHITAEGAQVLAEGLRDNSSLQFLGFWGNKVGDKGAQALAEALSDHQSLKWLSLVGNNIGSVGAQALASMLEKNVALEELCLEENHLQDAGVCSLAEGLKRNSSLKVLKLSNNCITFVGAEALLQALASNDTILEVWLRGNPFSPEEMEALSHRDSRLLL.

2 CARD domains span residues 1–82 (MCSQ…AVQE) and 107–178 (LQSH…HVQK). The ATG16L1-binding motif signature appears at 36 to 50 (WEVLSWEDYEGLRLV). 9 residues coordinate ADP: threonine 212, tyrosine 225, threonine 226, glycine 275, serine 276, glycine 277, lysine 278, serine 279, and threonine 280. Positions 214 to 247 (DGAENLCLEDIYTENTLEVRTEVGMAGPLHKSPA) are required for CARD9 binding. In terms of domain architecture, NACHT spans 266–402 (DTVLVVGEAG…RKVLTSRPDA (137 aa)). 272 to 279 (GEAGSGKS) serves as a coordination point for ATP. Cysteine 368 carries the S-palmitoyl cysteine lipid modification. Histidine 576 provides a ligand contact to ADP. LRR repeat units follow at residues 764–785 (RPVALQLDHNSVGDIGVEQLLP), 789–812 (ACKALYLRDNNISDRGICKLIEHA), 817–838 (QLQKLALFNNKLTDGCAHSVAQ), 845–857 (NFLALRLGNNHIT), 873–893 (SLQFLGFWGNKVGDKGAQALA), 901–922 (SLKWLSLVGNNIGSVGAQALAS), 929–949 (ALEELCLEENHLQDAGVCSLA), 957–978 (SLKVLKLSNNCITFVGAEALLQ), and 985–1005 (TILEVWLRGNPFSPEEMEALS).

It belongs to the NOD1-NOD2 family. Homooligomer: homooligomerizes following muramyl dipeptide (MDP)-binding, promoting RIPK2 recruitment. Interacts (via CARD domain) with RIPK2 (via CARD domain). Following RIPK2 recruitment, RIPK2 homooligomerizes via its CARD domain and forms long filaments named RIPosomes. Interacts (via CARD domain) with ubiquitin; inhibiting interaction with RIPK2. Component of a signaling complex consisting of ARHGEF2, NOD2 and RIPK2. Interacts with ANKRD17 (via N-terminus). Interacts with HSPA1A; the interaction enhances NOD2 stability. Interacts (via both CARD domains) with HSP90; the interaction enhances NOD2 stability. Interacts (via CARD domain) with SOCS3; the interaction promotes NOD2 degradation. Interacts (via CARD domain) with ERBIN; the interaction inhibits activation of NOD2. Interacts with MAPKBP1; the interaction is enhanced in the presence of muramyl dipeptide (MDP) and inhibits NOD2 homooligomerization and activation. Interacts with INAVA; the interaction takes place upon Pattern recognition receptor (PRR) stimulation. Interacts (via NACHT domain) with CARD9. Interacts (via CARD domain) with CASP1; this interaction leads to IL1B processing. Also interacts with CASP4. Interacts with NLRP1; this interaction is enhanced in the presence of muramyl dipeptide (MDP) and leads to increased IL1B release. Interacts with NLRP12; this interaction promotes degradation of NOD2 through the ubiquitin-proteasome pathway. Interacts with ANKHD1, C10orf67, CHMP5, DOCK7, ENTR1, KRT15, LDOC1, PPP1R12C, PPP2R3B, TRIM41 and VIM. Interacts with MAVS; interaction takes place following single-stranded RNA (ssRNA)-binding. Interacts with ATG16L1. Interacts with IRGM; promoting IRGM 'Lys-63'-linked polyubiquitination, which is required for interactions with the core autophagy factors. In terms of processing, palmitoylated by ZDHHC5; palmitoylation is required for proper recruitment to the bacterial entry site and hence for proper signaling upon cognate peptidoglycan detection. Palmitoylation promotes localization to the cell membrane. Palmitoylation protects from SQSTM1/p62-dependent autophagic degradation. Polyubiquitinated by TRIM27, leading to proteasome-mediated degradation. Polyubiquitinated and degraded following muramyl dipeptide (MDP) stimulation, conferring MDP tolerance and preventing septic shock. Post-translationally, degraded via selective autophagy following interaction with IRGM. IRGM promotes NOD2-RIPK2 RIPosome recruitment to autophagosome membranes, promoting their SQSTM1/p62-dependent autophagic degradation. In terms of processing, O-glycosylated by OGT, O-GlcNAcylation increases protein stability.

It is found in the cell membrane. The protein localises to the basolateral cell membrane. Its subcellular location is the cytoplasm. It localises to the mitochondrion. With respect to regulation, ADP-binding promotes an inactive closed conformation. In terms of biological role, pattern recognition receptor (PRR) that detects bacterial peptidoglycan fragments and other danger signals and plays an important role in gastrointestinal immunity. Specifically activated by muramyl dipeptide (MDP), a fragment of bacterial peptidoglycan found in every bacterial peptidoglycan type. NOD2 specifically recognizes and binds 6-O-phospho-MDP, the phosphorylated form of MDP, which is generated by NAGK. 6-O-phospho-MDP-binding triggers oligomerization that facilitates the binding and subsequent activation of the proximal adapter receptor-interacting RIPK2. Following recruitment, RIPK2 undergoes 'Met-1'- (linear) and 'Lys-63'-linked polyubiquitination by E3 ubiquitin-protein ligases XIAP, BIRC2, BIRC3 and the LUBAC complex, becoming a scaffolding protein for downstream effectors, triggering activation of the NF-kappa-B and MAP kinases signaling. This in turn leads to the transcriptional activation of hundreds of genes involved in immune response. Its ability to detect bacterial MDP plays a central role in maintaining the equilibrium between intestinal microbiota and host immune responses to control inflammation. An imbalance in this relationship results in dysbiosis, whereby pathogenic bacteria prevail on commensals, causing damage in the intestinal epithelial barrier as well as allowing bacterial invasion and inflammation. Acts as a regulator of appetite by sensing MDP in a subset of brain neurons: microbiota-derived MDP reach the brain, where they bind and activate NOD2 in inhibitory hypothalamic neurons, decreasing neuronal activity, thereby regulating satiety and body temperature. NOD2-dependent MDP-sensing of bacterial cell walls in the intestinal epithelial compartment contributes to sustained postnatal growth upon undernutrition. Also plays a role in antiviral response by acting as a sensor of single-stranded RNA (ssRNA) from viruses: upon ssRNA-binding, interacts with MAVS, leading to activation of interferon regulatory factor-3/IRF3 and expression of type I interferon. Also acts as a regulator of autophagy in dendritic cells via its interaction with ATG16L1, possibly by recruiting ATG16L1 at the site of bacterial entry. NOD2 activation in the small intestine crypt also contributes to intestinal stem cells survival and function: acts by promoting mitophagy via its association with ATG16L1. In addition to its main role in innate immunity, also regulates the adaptive immune system by acting as regulator of helper T-cell and regulatory T-cells (Tregs). Besides recognizing pathogens, also involved in the endoplasmic reticulum stress response: acts by sensing and binding to the cytosolic metabolite sphingosine-1-phosphate generated in response to endoplasmic reticulum stress, initiating an inflammation process that leads to activation of the NF-kappa-B and MAP kinases signaling. May also be involved in NLRP1 activation following activation by MDP, leading to CASP1 activation and IL1B release in macrophages. This Oryctolagus cuniculus (Rabbit) protein is Nucleotide-binding oligomerization domain-containing protein 2.